Here is a 218-residue protein sequence, read N- to C-terminus: MSIISAEAQKVREALIAKGIETPTVQLTKDKDSRRAEIQQHMRSVLELLGLDLQDDSLEETPHRLAKMYVDEIFSGLDYATFPKITNIENRMKVSEMVLVDDITLTSTCEHHFVTIDGKVAVAYYPKKWVIGLSKINRVVQFFAQRPQVQERFTEQILTAFQTILETDDVAVFVKATHFCVKCRGVKDTNSYTVTSAFGGVFLEDRETRKEFLGLINK.

Residues C109, H112, and C180 each coordinate Zn(2+).

The protein belongs to the GTP cyclohydrolase I family. In terms of assembly, toroid-shaped homodecamer, composed of two pentamers of five dimers.

It carries out the reaction GTP + H2O = 7,8-dihydroneopterin 3'-triphosphate + formate + H(+). It functions in the pathway cofactor biosynthesis; 7,8-dihydroneopterin triphosphate biosynthesis; 7,8-dihydroneopterin triphosphate from GTP: step 1/1. The protein is GTP cyclohydrolase 1 of Actinobacillus pleuropneumoniae serotype 5b (strain L20).